The sequence spans 113 residues: uncharacterized protein (113 aa).

Disordered regions lie at residues Met1–Gln22 and Asp90–Leu113. Positions Asp90–Phe99 are enriched in basic and acidic residues. Residues Glu100–Leu113 are compositionally biased toward low complexity.

This is an uncharacterized protein from Mycobacterium tuberculosis (strain ATCC 25618 / H37Rv).